The chain runs to 336 residues: 3-isopropylmalate dehydrogenase (336 aa).

Substrate-binding residues include arginine 87, arginine 97, arginine 121, and aspartate 211. Positions 211, 235, and 239 each coordinate Mg(2+). Position 271 to 283 (271 to 283 (GSAPDIAGQGIAD)) interacts with NAD(+).

It belongs to the isocitrate and isopropylmalate dehydrogenases family. LeuB type 2 subfamily. In terms of assembly, homodimer. It depends on Mg(2+) as a cofactor. The cofactor is Mn(2+).

It localises to the cytoplasm. The catalysed reaction is (2R,3S)-3-isopropylmalate + NAD(+) = 4-methyl-2-oxopentanoate + CO2 + NADH. The protein operates within amino-acid biosynthesis; L-leucine biosynthesis; L-leucine from 3-methyl-2-oxobutanoate: step 3/4. Its function is as follows. Catalyzes the oxidation of 3-carboxy-2-hydroxy-4-methylpentanoate (3-isopropylmalate) to 3-carboxy-4-methyl-2-oxopentanoate. The product decarboxylates to 4-methyl-2 oxopentanoate. The sequence is that of 3-isopropylmalate dehydrogenase (leuB) from Mycobacterium tuberculosis (strain CDC 1551 / Oshkosh).